Consider the following 330-residue polypeptide: Putative quinone oxidoreductase YhfP (330 aa).

NADP(+)-binding positions include Tyr-45, 160–163 (TGGV), 182–184 (TGN), Arg-202, Leu-248, Ile-262, Ser-273, and Asn-320.

Belongs to the zinc-containing alcohol dehydrogenase family. Quinone oxidoreductase subfamily. As to quaternary structure, homodimer, or homotetramer.

It is found in the cytoplasm. This Bacillus subtilis (strain 168) protein is Putative quinone oxidoreductase YhfP (yhfP).